Consider the following 204-residue polypeptide: Large ribosomal subunit protein bL25 (204 aa).

A disordered region spans residues Met1 to Ser20.

Belongs to the bacterial ribosomal protein bL25 family. CTC subfamily. As to quaternary structure, part of the 50S ribosomal subunit; part of the 5S rRNA/L5/L18/L25 subcomplex. Contacts the 5S rRNA. Binds to the 5S rRNA independently of L5 and L18.

Functionally, this is one of the proteins that binds to the 5S RNA in the ribosome where it forms part of the central protuberance. The chain is Large ribosomal subunit protein bL25 from Rhizobium meliloti (strain 1021) (Ensifer meliloti).